We begin with the raw amino-acid sequence, 1208 residues long: DNA-directed RNA polymerase subunit beta (1208 aa).

It belongs to the RNA polymerase beta chain family. The RNAP catalytic core consists of 2 alpha, 1 beta, 1 beta' and 1 omega subunit. When a sigma factor is associated with the core the holoenzyme is formed, which can initiate transcription.

It catalyses the reaction RNA(n) + a ribonucleoside 5'-triphosphate = RNA(n+1) + diphosphate. Its function is as follows. DNA-dependent RNA polymerase catalyzes the transcription of DNA into RNA using the four ribonucleoside triphosphates as substrates. This Enterococcus faecium (Streptococcus faecium) protein is DNA-directed RNA polymerase subunit beta.